We begin with the raw amino-acid sequence, 441 residues long: MTSQYSNYSCPLNNIQVNVIGSSRTSDDHFLEQMLTKRKKTNISQDLHYTLLGLNPRDLYQISIKLARIDEKKYKFNGNFNGGDYYPHKNSEIPMEDTEEIVHLDGYQTGARWMKTGVYFPKIGISKEQPDKERCLLLESLHAYVPVLRFTTSSGISLEVTVWSQKFVTTMTSSNRSVKRREKRKLEETTGPSAKKTPEVIEFTQEAVVPEVYNAQQVYQMQNDTMISSDSKFCSPLAFQQDFTEEFGTISQLDAYVNVNVQSCSSSSLSSPAALQQDSTVSSDNDFDDKNSEEFDAVFEYIDQQFSNHDQNPMDQQSKSIDLNQTTWTSQSINNQSYLSTASSPAALNQDSFASEKSSIVRDKKNDENCLDEFDRVFNELDQQFTPTENQLQDLSNCTTWNQEPINNSIQSNQLNNNIAPALEENVEDDNAIFEHFFICN.

Positions 18–199 form a DNA-binding region, T-box; it reads NVIGSSRTSD…TGPSAKKTPE (182 aa). Residues 268 to 289 form a disordered region; that stretch reads SLSSPAALQQDSTVSSDNDFDD. Over residues 273-284 the composition is skewed to polar residues; sequence AALQQDSTVSSD.

It is found in the nucleus. This Caenorhabditis elegans protein is Putative T-box protein 32 (tbx-32).